The primary structure comprises 216 residues: Probable disulfide bond formation protein D (216 aa).

Positions 1–25 are cleaved as a signal peptide; sequence MKSNKLMALGIVFSIAVLIVIGTIA. A disulfide bridge links cysteine 65 with cysteine 68.

This sequence belongs to the thioredoxin family. DsbA subfamily.

Functionally, may be required for disulfide bond formation in some proteins. The polypeptide is Probable disulfide bond formation protein D (bdbD) (Bacillus cereus (strain ATCC 14579 / DSM 31 / CCUG 7414 / JCM 2152 / NBRC 15305 / NCIMB 9373 / NCTC 2599 / NRRL B-3711)).